Reading from the N-terminus, the 59-residue chain is Cecropin-A (59 aa).

The N-terminal stretch at Met-1–Ala-23 is a signal peptide. A Leucine amide modification is found at Leu-57.

This sequence belongs to the cecropin family.

The protein resides in the secreted. Its function is as follows. Cecropins have lytic and antibacterial activity against several Gram-positive and Gram-negative bacteria. This chain is Cecropin-A (CECA), found in Culex pipiens pipiens (Northern house mosquito).